The chain runs to 117 residues: Immunoglobulin kappa variable 1-39 (117 aa).

The first 22 residues, 1–22, serve as a signal peptide directing secretion; sequence MDMRVPAQLLGLLLLWLRGARC. The interval 23–45 is framework-1; that stretch reads DIQMTQSPSSLSASVGDRVTITC. Residues 24–117 form the Ig-like domain; it reads IQMTQSPSSL…YYCQQSYSTP (94 aa). Cysteines 45 and 110 form a disulfide. The tract at residues 46–56 is complementarity-determining-1; that stretch reads RASQSISSYLN. The tract at residues 57–71 is framework-2; sequence WYQQKPGKAPKLLIY. The segment at 72–78 is complementarity-determining-2; that stretch reads AASSLQS. A framework-3 region spans residues 79–110; the sequence is GVPSRFSGSGSGTDFTLTISSLQPEDFATYYC. Residues 111-117 form a complementarity-determining-3 region; that stretch reads QQSYSTP.

In terms of assembly, immunoglobulins are composed of two identical heavy chains and two identical light chains; disulfide-linked.

It localises to the secreted. The protein resides in the cell membrane. In terms of biological role, v region of the variable domain of immunoglobulin light chains that participates in the antigen recognition. Immunoglobulins, also known as antibodies, are membrane-bound or secreted glycoproteins produced by B lymphocytes. In the recognition phase of humoral immunity, the membrane-bound immunoglobulins serve as receptors which, upon binding of a specific antigen, trigger the clonal expansion and differentiation of B lymphocytes into immunoglobulins-secreting plasma cells. Secreted immunoglobulins mediate the effector phase of humoral immunity, which results in the elimination of bound antigens. The antigen binding site is formed by the variable domain of one heavy chain, together with that of its associated light chain. Thus, each immunoglobulin has two antigen binding sites with remarkable affinity for a particular antigen. The variable domains are assembled by a process called V-(D)-J rearrangement and can then be subjected to somatic hypermutations which, after exposure to antigen and selection, allow affinity maturation for a particular antigen. The chain is Immunoglobulin kappa variable 1-39 from Homo sapiens (Human).